We begin with the raw amino-acid sequence, 115 residues long: Immunoglobulin kappa variable 5-2 (115 aa).

The signal sequence occupies residues methionine 1–alanine 20. Residues glutamate 21–cysteine 43 are framework-1. Residues threonine 22 to proline 115 enclose the Ig-like domain. Asparagine 40 carries N-linked (GlcNAc...) asparagine glycosylation. Serine 42 carries the phosphoserine modification. The cysteines at positions 43 and 108 are disulfide-linked. Residues lysine 44–asparagine 54 form a complementarity-determining-1 region. Residues tryptophan 55 to glutamine 69 form a framework-2 region. A complementarity-determining-2 region spans residues glutamate 70 to proline 76. Residues glycine 77–cysteine 108 form a framework-3 region. Positions leucine 109–proline 115 are complementarity-determining-3.

In terms of assembly, immunoglobulins are composed of two identical heavy chains and two identical light chains; disulfide-linked.

It localises to the secreted. The protein localises to the cell membrane. Its function is as follows. V region of the variable domain of immunoglobulin light chains that participates in the antigen recognition. Immunoglobulins, also known as antibodies, are membrane-bound or secreted glycoproteins produced by B lymphocytes. In the recognition phase of humoral immunity, the membrane-bound immunoglobulins serve as receptors which, upon binding of a specific antigen, trigger the clonal expansion and differentiation of B lymphocytes into immunoglobulins-secreting plasma cells. Secreted immunoglobulins mediate the effector phase of humoral immunity, which results in the elimination of bound antigens. The antigen binding site is formed by the variable domain of one heavy chain, together with that of its associated light chain. Thus, each immunoglobulin has two antigen binding sites with remarkable affinity for a particular antigen. The variable domains are assembled by a process called V-(D)-J rearrangement and can then be subjected to somatic hypermutations which, after exposure to antigen and selection, allow affinity maturation for a particular antigen. The chain is Immunoglobulin kappa variable 5-2 from Homo sapiens (Human).